The following is a 545-amino-acid chain: CTP synthase (545 aa).

An amidoligase domain region spans residues 1-266 (MTTNYIFVTG…DDYICKRFSL (266 aa)). Ser-14 provides a ligand contact to CTP. A UTP-binding site is contributed by Ser-14. ATP is bound by residues 15–20 (SLGKGI) and Asp-72. 2 residues coordinate Mg(2+): Asp-72 and Glu-140. CTP is bound by residues 147–149 (DIE), 187–192 (KTKPTQ), and Lys-223. Residues 187-192 (KTKPTQ) and Lys-223 contribute to the UTP site. An ATP-binding site is contributed by 239–241 (KDV). One can recognise a Glutamine amidotransferase type-1 domain in the interval 291–542 (TIGMVGKYIE…VKAANEHQKR (252 aa)). L-glutamine is bound at residue Gly-352. Cys-379 serves as the catalytic Nucleophile; for glutamine hydrolysis. Residues 380–383 (LGMQ), Glu-403, and Arg-470 contribute to the L-glutamine site. Active-site residues include His-515 and Glu-517.

This sequence belongs to the CTP synthase family. As to quaternary structure, homotetramer.

It catalyses the reaction UTP + L-glutamine + ATP + H2O = CTP + L-glutamate + ADP + phosphate + 2 H(+). The enzyme catalyses L-glutamine + H2O = L-glutamate + NH4(+). The catalysed reaction is UTP + NH4(+) + ATP = CTP + ADP + phosphate + 2 H(+). Its pathway is pyrimidine metabolism; CTP biosynthesis via de novo pathway; CTP from UDP: step 2/2. Its activity is regulated as follows. Allosterically activated by GTP, when glutamine is the substrate; GTP has no effect on the reaction when ammonia is the substrate. The allosteric effector GTP functions by stabilizing the protein conformation that binds the tetrahedral intermediate(s) formed during glutamine hydrolysis. Inhibited by the product CTP, via allosteric rather than competitive inhibition. Its function is as follows. Catalyzes the ATP-dependent amination of UTP to CTP with either L-glutamine or ammonia as the source of nitrogen. Regulates intracellular CTP levels through interactions with the four ribonucleotide triphosphates. This Salmonella newport (strain SL254) protein is CTP synthase.